The primary structure comprises 418 residues: Nisin biosynthesis protein NisC (418 aa).

This sequence to B.subtilis SpaC and S.epidermidis EpiC.

Functionally, could be implicated in the processing or the export process of the nisin lantibiotic. The protein is Nisin biosynthesis protein NisC (nisC) of Lactococcus lactis subsp. lactis (Streptococcus lactis).